Consider the following 63-residue polypeptide: Large ribosomal subunit protein bL32 (63 aa).

The tract at residues 1–23 (MATPKAKVSKSRRDKRRAQFTAR) is disordered. A compositionally biased stretch (basic residues) spans 7 to 18 (KVSKSRRDKRRA).

This sequence belongs to the bacterial ribosomal protein bL32 family.

The polypeptide is Large ribosomal subunit protein bL32 (Chlorobium phaeobacteroides (strain BS1)).